The sequence spans 192 residues: UPF0312 protein ECA1782 (192 aa).

The N-terminal stretch at 1-23 (MLKKTLLSLTAVSMLASAGSALA) is a signal peptide.

This sequence belongs to the UPF0312 family. Type 1 subfamily.

The protein localises to the periplasm. This chain is UPF0312 protein ECA1782, found in Pectobacterium atrosepticum (strain SCRI 1043 / ATCC BAA-672) (Erwinia carotovora subsp. atroseptica).